The chain runs to 498 residues: ATP synthase subunit beta, chloroplastic (498 aa).

ATP is bound at residue 172–179 (GGAGVGKT).

Belongs to the ATPase alpha/beta chains family. In terms of assembly, F-type ATPases have 2 components, CF(1) - the catalytic core - and CF(0) - the membrane proton channel. CF(1) has five subunits: alpha(3), beta(3), gamma(1), delta(1), epsilon(1). CF(0) has four main subunits: a(1), b(1), b'(1) and c(9-12).

It is found in the plastid. The protein resides in the chloroplast thylakoid membrane. It carries out the reaction ATP + H2O + 4 H(+)(in) = ADP + phosphate + 5 H(+)(out). Its function is as follows. Produces ATP from ADP in the presence of a proton gradient across the membrane. The catalytic sites are hosted primarily by the beta subunits. This Coffea arabica (Arabian coffee) protein is ATP synthase subunit beta, chloroplastic.